The primary structure comprises 304 residues: UDP-3-O-acyl-N-acetylglucosamine deacetylase (304 aa).

Residues H79, H238, and D242 each contribute to the Zn(2+) site. The Proton donor role is filled by H265.

It belongs to the LpxC family. The cofactor is Zn(2+).

It catalyses the reaction a UDP-3-O-[(3R)-3-hydroxyacyl]-N-acetyl-alpha-D-glucosamine + H2O = a UDP-3-O-[(3R)-3-hydroxyacyl]-alpha-D-glucosamine + acetate. The protein operates within glycolipid biosynthesis; lipid IV(A) biosynthesis; lipid IV(A) from (3R)-3-hydroxytetradecanoyl-[acyl-carrier-protein] and UDP-N-acetyl-alpha-D-glucosamine: step 2/6. Functionally, catalyzes the hydrolysis of UDP-3-O-myristoyl-N-acetylglucosamine to form UDP-3-O-myristoylglucosamine and acetate, the committed step in lipid A biosynthesis. The sequence is that of UDP-3-O-acyl-N-acetylglucosamine deacetylase from Laribacter hongkongensis (strain HLHK9).